We begin with the raw amino-acid sequence, 565 residues long: Pentatricopeptide repeat-containing protein At3g20730 (565 aa).

PPR repeat units follow at residues 12–46 (SPSL…GFCS), 47–77 (NLQL…ISKR), 78–112 (DVVS…DVKA), 113–147 (NQFT…NCAG), 148–178 (NLIV…MKER), 179–213 (DLVS…GKKP), 214–248 (DCFT…GFGR), 249–279 (SSAL…TKKR), 280–315 (DLLS…KTKM), 316–351 (DEVV…QIRF), 352–382 (DVAL…MKEK), 383–417 (DVRS…RIKP), 418–448 (NDVT…MINK), and 454–484 (REEH…KEGI). Residues 491 to 565 (TWGAFLDACR…NKAPGYSLVY (75 aa)) are type E motif; degenerate.

Belongs to the PPR family. PCMP-E subfamily.

The polypeptide is Pentatricopeptide repeat-containing protein At3g20730 (PCMP-E94) (Arabidopsis thaliana (Mouse-ear cress)).